A 517-amino-acid chain; its full sequence is Crotonobetaine/carnitine--CoA ligase (517 aa).

Belongs to the ATP-dependent AMP-binding enzyme family.

The catalysed reaction is 4-(trimethylamino)butanoate + ATP + CoA = 4-(trimethylamino)butanoyl-CoA + AMP + diphosphate. It carries out the reaction crotonobetaine + ATP + CoA = crotonobetainyl-CoA + AMP + diphosphate. The enzyme catalyses (R)-carnitine + ATP + CoA = (R)-carnitinyl-CoA + AMP + diphosphate. It participates in amine and polyamine metabolism; carnitine metabolism. Its function is as follows. Catalyzes the transfer of CoA to carnitine, generating the initial carnitinyl-CoA needed for the CaiB reaction cycle. Also has activity toward crotonobetaine and gamma-butyrobetaine. This is Crotonobetaine/carnitine--CoA ligase from Salmonella paratyphi A (strain ATCC 9150 / SARB42).